Reading from the N-terminus, the 427-residue chain is MKLKTNIRHLHGSIRVPGDKSISHRSIIFGSLAEGETKVYDILRGEDVLSTMQVFRDLGVEIEDKDGVITVQGVGMAGLKAPQNALNMGNSGTSIRLISGVLAGADFEVEMFGDDSLSKRPMDRVTLPLKKMGVSISGQTERDLPPLRLKGTKNLRPIHYELPIASAQVKSALMFAALQAKGESVIIEKEYTRNHTEDMLQQFGGHLSVDGKKITVQGPQKLTGQKVVVPGDISSAAFWLVAGLIAPNSRLVLQNVGINETRTGIIDVIRAMGGKLEITEIDPVAKSATLIVESSDLKGTEICGALIPRLIDELPIIALLATQAQGVTVIKDAEELKVKETDRIQVVADALNSMGADITPTADGMIIKGKSALHGARVNTFGDHRIGMMTAIAALLVADGEVELDRAEAINTSYPSFFDDLESLIHG.

3 residues coordinate 3-phosphoshikimate: lysine 20, serine 21, and arginine 25. Residue lysine 20 coordinates phosphoenolpyruvate. The phosphoenolpyruvate site is built by glycine 92 and arginine 120. Residues serine 166, glutamine 168, aspartate 312, and lysine 339 each coordinate 3-phosphoshikimate. Position 168 (glutamine 168) interacts with phosphoenolpyruvate. Aspartate 312 serves as the catalytic Proton acceptor. Residues arginine 343 and arginine 385 each contribute to the phosphoenolpyruvate site.

Belongs to the EPSP synthase family. In terms of assembly, monomer.

It localises to the cytoplasm. It carries out the reaction 3-phosphoshikimate + phosphoenolpyruvate = 5-O-(1-carboxyvinyl)-3-phosphoshikimate + phosphate. It functions in the pathway metabolic intermediate biosynthesis; chorismate biosynthesis; chorismate from D-erythrose 4-phosphate and phosphoenolpyruvate: step 6/7. Functionally, catalyzes the transfer of the enolpyruvyl moiety of phosphoenolpyruvate (PEP) to the 5-hydroxyl of shikimate-3-phosphate (S3P) to produce enolpyruvyl shikimate-3-phosphate and inorganic phosphate. In Streptococcus pneumoniae serotype 19F (strain G54), this protein is 3-phosphoshikimate 1-carboxyvinyltransferase.